Here is a 40-residue protein sequence, read N- to C-terminus: Photosystem II reaction center protein J (40 aa).

The helical transmembrane segment at 10 to 30 (LWLIGTVAGILVIGLVGIFFY) threads the bilayer.

The protein belongs to the PsbJ family. As to quaternary structure, PSII is composed of 1 copy each of membrane proteins PsbA, PsbB, PsbC, PsbD, PsbE, PsbF, PsbH, PsbI, PsbJ, PsbK, PsbL, PsbM, PsbT, PsbX, PsbY, PsbZ, Psb30/Ycf12, at least 3 peripheral proteins of the oxygen-evolving complex and a large number of cofactors. It forms dimeric complexes.

It localises to the plastid. The protein resides in the chloroplast thylakoid membrane. One of the components of the core complex of photosystem II (PSII). PSII is a light-driven water:plastoquinone oxidoreductase that uses light energy to abstract electrons from H(2)O, generating O(2) and a proton gradient subsequently used for ATP formation. It consists of a core antenna complex that captures photons, and an electron transfer chain that converts photonic excitation into a charge separation. The polypeptide is Photosystem II reaction center protein J (Marchantia polymorpha (Common liverwort)).